The sequence spans 374 residues: F-box/kelch-repeat protein At2g24250 (374 aa).

The region spanning 14–63 is the F-box domain; it reads PDWSQLPEELLHIISTHLEDHYFDAVHARSVCRSWRSTFPFPSSLLRQSY. Kelch repeat units lie at residues 100–150 and 249–301; these read SEYF…PLGH and NFLV…LGNF.

This Arabidopsis thaliana (Mouse-ear cress) protein is F-box/kelch-repeat protein At2g24250.